Here is a 382-residue protein sequence, read N- to C-terminus: MNNFVKQVASKSLKPTKKLSPSDEVISLNECIISFNLDNFYYCNDGLFTKPINTPEDVLKSLLIMESFAYEKMIIKGLIKILISRAYINDIYFTPFGWLTGVDDDPETHVVIKIIFNSSLISIKSQVIEYLKPYNVNNLSVLTTEKELSINTFNVPDSIPMSIISFFPFDTDFILVILFFGVYNDSYCGISYISPKERLPYIIEILKPLVSEINMLSDEIGRTSSIRIFNSTSVKKFPTNTLTSICEIVYSFDESSFPTPKTFTPLNASPYIPKKIVSLLDLPSNVEIKAISRGGVDFITHINNKRLNTILVIAKDNFLKNSTFSGTFIKENIIWKGIYTYRIIKSSFPVPTIKSVTNKKKICKKHCFVNSQYTTRTLSHIL.

Belongs to the orthopoxvirus OPG082 family.

The protein resides in the virion. Binds to the hairpin form of the viral telomeric sequence. Might direct genome encapsidation into the virus particle. The sequence is that of Telomere-binding protein OPG082 (OPG082) from Homo sapiens (Human).